We begin with the raw amino-acid sequence, 228 residues long: Uracil-DNA glycosylase (228 aa).

D71 acts as the Proton acceptor in catalysis.

This sequence belongs to the uracil-DNA glycosylase (UDG) superfamily. UNG family.

It localises to the cytoplasm. The enzyme catalyses Hydrolyzes single-stranded DNA or mismatched double-stranded DNA and polynucleotides, releasing free uracil.. Excises uracil residues from the DNA which can arise as a result of misincorporation of dUMP residues by DNA polymerase or due to deamination of cytosine. This chain is Uracil-DNA glycosylase, found in Thermobifida fusca (strain YX).